Consider the following 163-residue polypeptide: Phosphopantetheine adenylyltransferase (163 aa).

ATP contacts are provided by Ser-10 and His-18. A substrate-binding site is contributed by Ser-10. 3 residues coordinate substrate: Lys-42, Thr-75, and Arg-89. ATP-binding positions include 90–92 (GIR), Glu-100, and 125–131 (YAHVSSS).

The protein belongs to the bacterial CoaD family. As to quaternary structure, homohexamer. Mg(2+) serves as cofactor.

It localises to the cytoplasm. The enzyme catalyses (R)-4'-phosphopantetheine + ATP + H(+) = 3'-dephospho-CoA + diphosphate. The protein operates within cofactor biosynthesis; coenzyme A biosynthesis; CoA from (R)-pantothenate: step 4/5. Reversibly transfers an adenylyl group from ATP to 4'-phosphopantetheine, yielding dephospho-CoA (dPCoA) and pyrophosphate. The chain is Phosphopantetheine adenylyltransferase from Enterococcus faecalis (strain ATCC 700802 / V583).